The primary structure comprises 487 residues: Serine/threonine-protein kinase BSK7 (487 aa).

Glycine 2 carries N-myristoyl glycine lipidation. The Protein kinase domain maps to glutamate 59–methionine 325. ATP is bound by residues histidine 65–valine 73 and lysine 87. Aspartate 181 acts as the Proton acceptor in catalysis.

This sequence belongs to the protein kinase superfamily. Ser/Thr protein kinase family.

It localises to the cell membrane. The catalysed reaction is L-seryl-[protein] + ATP = O-phospho-L-seryl-[protein] + ADP + H(+). It catalyses the reaction L-threonyl-[protein] + ATP = O-phospho-L-threonyl-[protein] + ADP + H(+). Its function is as follows. Probable serine/threonine kinase that acts as a positive regulator of brassinosteroid (BR) signaling downstream of the receptor kinase BRI1. Functions redundantly with BSK3, BSK5, BSK6 and BSK8. In Arabidopsis thaliana (Mouse-ear cress), this protein is Serine/threonine-protein kinase BSK7.